The following is a 124-amino-acid chain: Small ribosomal subunit protein uS12 (124 aa).

The disordered stretch occupies residues 1–28 (MPTISQLIGSERKRLTRKTKSPALKSCP). A 3-methylthioaspartic acid modification is found at D89. The tract at residues 104-124 (TAGVKDRRQSRSKYGAKAPKD) is disordered.

This sequence belongs to the universal ribosomal protein uS12 family. As to quaternary structure, part of the 30S ribosomal subunit. Contacts proteins S8 and S17. May interact with IF1 in the 30S initiation complex.

With S4 and S5 plays an important role in translational accuracy. In terms of biological role, interacts with and stabilizes bases of the 16S rRNA that are involved in tRNA selection in the A site and with the mRNA backbone. Located at the interface of the 30S and 50S subunits, it traverses the body of the 30S subunit contacting proteins on the other side and probably holding the rRNA structure together. The combined cluster of proteins S8, S12 and S17 appears to hold together the shoulder and platform of the 30S subunit. The polypeptide is Small ribosomal subunit protein uS12 (Prochlorococcus marinus (strain MIT 9312)).